A 129-amino-acid polypeptide reads, in one-letter code: Regulator of ribonuclease activity B (129 aa).

The protein belongs to the RraB family. Interacts with the C-terminal region of Rne.

It is found in the cytoplasm. Globally modulates RNA abundance by binding to RNase E (Rne) and regulating its endonucleolytic activity. Can modulate Rne action in a substrate-dependent manner by altering the composition of the degradosome. The protein is Regulator of ribonuclease activity B of Shewanella denitrificans (strain OS217 / ATCC BAA-1090 / DSM 15013).